Reading from the N-terminus, the 296-residue chain is Fructose-bisphosphate aldolase class 1 (296 aa).

The active-site Proton acceptor is the Glu-175. Lys-212 acts as the Schiff-base intermediate with dihydroxyacetone-P in catalysis.

Belongs to the class I fructose-bisphosphate aldolase family.

The catalysed reaction is beta-D-fructose 1,6-bisphosphate = D-glyceraldehyde 3-phosphate + dihydroxyacetone phosphate. The protein operates within carbohydrate degradation; glycolysis; D-glyceraldehyde 3-phosphate and glycerone phosphate from D-glucose: step 4/4. The sequence is that of Fructose-bisphosphate aldolase class 1 from Staphylococcus aureus (strain MRSA252).